A 291-amino-acid chain; its full sequence is Transmembrane O-methyltransferase (291 aa).

Residues 31 to 51 form a helical membrane-spanning segment; sequence VGTMSPAIALAFLPLVVTLLV. S-adenosyl-L-methionine-binding positions include glutamate 137, 139–140, serine 145, glutamate 163, and serine 193; that span reads GT.

This sequence belongs to the class I-like SAM-binding methyltransferase superfamily. Cation-dependent O-methyltransferase family. As to quaternary structure, interacts with LHFPL5, PCDH15, TMC1, TMC2 and TMIE. Interacts directly with TMC1. The interaction of TOMT with TMC1 and TMC2 is required for the transportation of TMC1/2 into the stereocilia of hair cells.

The protein localises to the membrane. The protein resides in the cytoplasm. It localises to the endoplasmic reticulum. The enzyme catalyses a catechol + S-adenosyl-L-methionine = a guaiacol + S-adenosyl-L-homocysteine + H(+). Functionally, catalyzes the O-methylation, and thereby the inactivation, of catecholamine neurotransmitters and catechol hormones. Required for auditory function. Component of the cochlear hair cell's mechanotransduction (MET) machinery. Involved in the assembly of the asymmetric tip-link MET complex. Required for transportation of TMC1 and TMC2 proteins into the mechanically sensitive stereocilia of the hair cells. The function in MET is independent of the enzymatic activity. In Pan troglodytes (Chimpanzee), this protein is Transmembrane O-methyltransferase.